The sequence spans 376 residues: Putative glutamate--cysteine ligase 2-1 (376 aa).

The protein belongs to the glutamate--cysteine ligase type 2 family. YbdK subfamily.

It catalyses the reaction L-cysteine + L-glutamate + ATP = gamma-L-glutamyl-L-cysteine + ADP + phosphate + H(+). In terms of biological role, ATP-dependent carboxylate-amine ligase which exhibits weak glutamate--cysteine ligase activity. This Mycolicibacterium smegmatis (strain ATCC 700084 / mc(2)155) (Mycobacterium smegmatis) protein is Putative glutamate--cysteine ligase 2-1.